A 142-amino-acid polypeptide reads, in one-letter code: Hemoglobin subunit alpha (142 aa).

Positions 2-142 (VLSPADKSNV…VSTVLTSKYR (141 aa)) constitute a Globin domain. Ser4 bears the Phosphoserine mark. Lys8 and Lys12 each carry N6-succinyllysine. Position 17 is an N6-acetyllysine; alternate (Lys17). N6-succinyllysine; alternate is present on Lys17. Tyr25 is subject to Phosphotyrosine. Ser36 bears the Phosphoserine mark. Residue Lys41 is modified to N6-succinyllysine. Ser50 carries the post-translational modification Phosphoserine. His59 contributes to the O2 binding site. His88 provides a ligand contact to heme b. Position 103 is a phosphoserine (Ser103). Thr109 carries the post-translational modification Phosphothreonine. Residues Ser125 and Ser132 each carry the phosphoserine modification. Phosphothreonine is present on residues Thr135 and Thr138. The residue at position 139 (Ser139) is a Phosphoserine.

This sequence belongs to the globin family. In terms of assembly, heterotetramer of two alpha chains and two beta chains. Red blood cells.

In terms of biological role, involved in oxygen transport from the lung to the various peripheral tissues. Hemopressin acts as an antagonist peptide of the cannabinoid receptor CNR1. Hemopressin-binding efficiently blocks cannabinoid receptor CNR1 and subsequent signaling. The polypeptide is Hemoglobin subunit alpha (HBA) (Chlorocebus aethiops (Green monkey)).